Here is a 412-residue protein sequence, read N- to C-terminus: Serine hydroxymethyltransferase (412 aa).

(6S)-5,6,7,8-tetrahydrofolate is bound by residues leucine 117 and 121–123; that span reads GHL. At lysine 226 the chain carries N6-(pyridoxal phosphate)lysine. Glutamate 241 lines the (6S)-5,6,7,8-tetrahydrofolate pocket.

Belongs to the SHMT family. As to quaternary structure, homodimer. Requires pyridoxal 5'-phosphate as cofactor.

The protein resides in the cytoplasm. The enzyme catalyses (6R)-5,10-methylene-5,6,7,8-tetrahydrofolate + glycine + H2O = (6S)-5,6,7,8-tetrahydrofolate + L-serine. It functions in the pathway one-carbon metabolism; tetrahydrofolate interconversion. The protein operates within amino-acid biosynthesis; glycine biosynthesis; glycine from L-serine: step 1/1. Its function is as follows. Catalyzes the reversible interconversion of serine and glycine with tetrahydrofolate (THF) serving as the one-carbon carrier. This reaction serves as the major source of one-carbon groups required for the biosynthesis of purines, thymidylate, methionine, and other important biomolecules. Also exhibits THF-independent aldolase activity toward beta-hydroxyamino acids, producing glycine and aldehydes, via a retro-aldol mechanism. In Staphylococcus carnosus (strain TM300), this protein is Serine hydroxymethyltransferase.